We begin with the raw amino-acid sequence, 171 residues long: Co-chaperone protein HscB (171 aa).

The region spanning 2 to 74 (DYFTLFGLPA…LTRAEYLLSL (73 aa)) is the J domain.

This sequence belongs to the HscB family. As to quaternary structure, interacts with HscA and stimulates its ATPase activity. Interacts with IscU.

In terms of biological role, co-chaperone involved in the maturation of iron-sulfur cluster-containing proteins. Seems to help targeting proteins to be folded toward HscA. The polypeptide is Co-chaperone protein HscB (Salmonella schwarzengrund (strain CVM19633)).